The following is a 61-amino-acid chain: MKRFLFLLLTISLLVMVQIQTGLSGQNDTSQTSSPSASSNISGGIFLFFVANAIIHLFCFS.

Positions 1-24 are cleaved as a signal peptide; that stretch reads MKRFLFLLLTISLLVMVQIQTGLS. An N-linked (GlcNAc...) asparagine glycan is attached at N27. A lipid anchor (GPI-anchor amidated serine) is attached at S36. A propeptide spans 37–61 (removed in mature form); that stretch reads ASSNISGGIFLFFVANAIIHLFCFS. A glycan (N-linked (GlcNAc...) asparagine) is linked at N40.

It localises to the cell membrane. May play a role in carrying and orienting carbohydrate, as well as having a more specific role. The protein is CAMPATH-1 antigen (CD52) of Homo sapiens (Human).